The sequence spans 608 residues: Eukaryotic translation initiation factor 2A (608 aa).

Positions 1–42 (MSAPNNNNNNTTTTTTTSPSPSQSSPTLTSVASNSTTTTTTE) are disordered. WD repeat units lie at residues 115–161 (INRP…ILYK), 207–255 (IKLQ…EYCS), 310–350 (NIKG…PLVD), and 351–393 (FGLN…RICG). Low complexity-rich tracts occupy residues 466–478 (SIQQQKESSPQPQ) and 520–544 (STFKPKQKPSSTTTTNNTTTTTTKP). 2 disordered regions span residues 466–499 (SIQQQKESSPQPQKYTPPSLRNMQAAPPVVTSPP) and 520–554 (STFKPKQKPSSTTTTNNTTTTTTKPAADEPKRELT). The span at 545–554 (AADEPKRELT) shows a compositional bias: basic and acidic residues. Residues 550–608 (KRELTPIEKKIRNVERKLKEVEVLKEKLNSGEFIPPTAIEKINNEQKFLEELRKLQSEL) adopt a coiled-coil conformation.

It belongs to the WD repeat EIF2A family.

Its function is as follows. Functions in the early steps of protein synthesis of a small number of specific mRNAs. Acts by directing the binding of methionyl-tRNAi to 40S ribosomal subunits. In contrast to the eIF-2 complex, it binds methionyl-tRNAi to 40S subunits in a codon-dependent manner, whereas the eIF-2 complex binds methionyl-tRNAi to 40S subunits in a GTP-dependent manner. This chain is Eukaryotic translation initiation factor 2A (eif2a), found in Dictyostelium discoideum (Social amoeba).